We begin with the raw amino-acid sequence, 258 residues long: Indole-3-glycerol phosphate synthase (258 aa).

The protein belongs to the TrpC family.

It catalyses the reaction 1-(2-carboxyphenylamino)-1-deoxy-D-ribulose 5-phosphate + H(+) = (1S,2R)-1-C-(indol-3-yl)glycerol 3-phosphate + CO2 + H2O. Its pathway is amino-acid biosynthesis; L-tryptophan biosynthesis; L-tryptophan from chorismate: step 4/5. This Geobacillus thermodenitrificans (strain NG80-2) protein is Indole-3-glycerol phosphate synthase.